Consider the following 503-residue polypeptide: Glycosyltransferase family 92 protein ZK381.2 (503 aa).

A helical membrane pass occupies residues 7–27 (YKPCLLIILIFNSVILLFILI). Positions 156-441 (KPVIICISPQ…FKCYFDSFYK (286 aa)) constitute a GT92 domain.

This sequence belongs to the glycosyltransferase 92 family.

Its subcellular location is the membrane. The sequence is that of Glycosyltransferase family 92 protein ZK381.2 from Caenorhabditis elegans.